Here is a 537-residue protein sequence, read N- to C-terminus: Chaperonin GroEL 2 (537 aa).

Residues T29–P32, D86–T90, G412, and D495 contribute to the ATP site.

It belongs to the chaperonin (HSP60) family. In terms of assembly, forms a cylinder of 14 subunits composed of two heptameric rings stacked back-to-back. Interacts with the co-chaperonin GroES.

The protein resides in the cytoplasm. The catalysed reaction is ATP + H2O + a folded polypeptide = ADP + phosphate + an unfolded polypeptide.. Its function is as follows. Together with its co-chaperonin GroES, plays an essential role in assisting protein folding. The GroEL-GroES system forms a nano-cage that allows encapsulation of the non-native substrate proteins and provides a physical environment optimized to promote and accelerate protein folding. This is Chaperonin GroEL 2 from Paenarthrobacter aurescens (strain TC1).